Consider the following 214-residue polypeptide: Scytalone dehydratase-like protein mdpB (214 aa).

Positions 40 and 60 each coordinate substrate. Residues histidine 95 and histidine 120 contribute to the active site.

The protein belongs to the scytalone dehydratase family.

It functions in the pathway secondary metabolite biosynthesis. Its function is as follows. Scytalone dehydratase-like protein; part of the gene cluster that mediates the biosynthesis of monodictyphenone, a prenyl xanthone derivative. The pathway begins with the synthesis of atrochrysone thioester by the polyketide synthase (PKS) mdpG. The atrochrysone carboxyl ACP thioesterase mdpF then breaks the thioester bond and releases the atrochrysone carboxylic acid from mdpG. The atrochrysone carboxylic acid is then converted to atrochrysone which is further transformed into emodin anthrone. The next step is performed by the anthrone oxygenase mdpH that catalyzes the oxidation of emodinanthrone to emodin. Emodin is further modified to yield monodictyphenone via several steps involving mdpB, mdpC mdpJ, mdpK and mdpL. These enzymes with xptA, xptB and xptC are also proposed to be involved in the synthesis of shamixanthone from emodin. Especially, direct reduction of emodin by the short chain dehydrogenase mdpC followed by dehydration catalyzed by the scytalone dehydratase-like protein mdpB gives loss of oxygen and formation of chrysophanol intermediate in two simple steps. This Emericella nidulans (strain FGSC A4 / ATCC 38163 / CBS 112.46 / NRRL 194 / M139) (Aspergillus nidulans) protein is Scytalone dehydratase-like protein mdpB.